The sequence spans 62 residues: UPF0434 protein RHE_CH03977 (62 aa).

It belongs to the UPF0434 family.

This Rhizobium etli (strain ATCC 51251 / DSM 11541 / JCM 21823 / NBRC 15573 / CFN 42) protein is UPF0434 protein RHE_CH03977.